The chain runs to 298 residues: N-acetylmuramic acid 6-phosphate etherase (298 aa).

The SIS domain occupies 55-218 (IHAQVSGGGR…STGLMIKSGK (164 aa)). Catalysis depends on glutamate 83, which acts as the Proton donor. Glutamate 114 is an active-site residue.

Belongs to the GCKR-like family. MurNAc-6-P etherase subfamily. In terms of assembly, homodimer.

It catalyses the reaction N-acetyl-D-muramate 6-phosphate + H2O = N-acetyl-D-glucosamine 6-phosphate + (R)-lactate. It participates in amino-sugar metabolism; 1,6-anhydro-N-acetylmuramate degradation. Its pathway is amino-sugar metabolism; N-acetylmuramate degradation. The protein operates within cell wall biogenesis; peptidoglycan recycling. Its function is as follows. Specifically catalyzes the cleavage of the D-lactyl ether substituent of MurNAc 6-phosphate, producing GlcNAc 6-phosphate and D-lactate. Together with AnmK, is also required for the utilization of anhydro-N-acetylmuramic acid (anhMurNAc) either imported from the medium or derived from its own cell wall murein, and thus plays a role in cell wall recycling. This Shigella flexneri serotype 5b (strain 8401) protein is N-acetylmuramic acid 6-phosphate etherase.